A 558-amino-acid polypeptide reads, in one-letter code: Arginine--tRNA ligase (558 aa).

Residues 134–144 carry the 'HIGH' region motif; the sequence is ANPTGPMVLVQ.

It belongs to the class-I aminoacyl-tRNA synthetase family. Monomer.

The protein resides in the cytoplasm. It carries out the reaction tRNA(Arg) + L-arginine + ATP = L-arginyl-tRNA(Arg) + AMP + diphosphate. This is Arginine--tRNA ligase from Symbiobacterium thermophilum (strain DSM 24528 / JCM 14929 / IAM 14863 / T).